The following is a 244-amino-acid chain: Phosphoadenosine 5'-phosphosulfate reductase (244 aa).

Cysteine 239 acts as the Nucleophile; cysteine thiosulfonate intermediate in catalysis.

It belongs to the PAPS reductase family. CysH subfamily.

The protein resides in the cytoplasm. It carries out the reaction [thioredoxin]-disulfide + sulfite + adenosine 3',5'-bisphosphate + 2 H(+) = [thioredoxin]-dithiol + 3'-phosphoadenylyl sulfate. It participates in sulfur metabolism; hydrogen sulfide biosynthesis; sulfite from sulfate: step 3/3. In terms of biological role, catalyzes the formation of sulfite from phosphoadenosine 5'-phosphosulfate (PAPS) using thioredoxin as an electron donor. The polypeptide is Phosphoadenosine 5'-phosphosulfate reductase (Enterobacter sp. (strain 638)).